A 676-amino-acid polypeptide reads, in one-letter code: Periplasmic alpha-amylase (676 aa).

A signal peptide spans 1–17 (MKLAACFLTLLPGFAVA). 2 disulfides stabilise this stretch: Cys-57/Cys-75 and Cys-121/Cys-537. Position 314 (Asn-314) interacts with Ca(2+). Asp-460 serves as the catalytic Nucleophile. His-464 contributes to the Ca(2+) binding site. Catalysis depends on Glu-503, which acts as the Proton donor.

This sequence belongs to the glycosyl hydrolase 13 family. In terms of assembly, monomer. Ca(2+) is required as a cofactor.

It localises to the periplasm. It catalyses the reaction Endohydrolysis of (1-&gt;4)-alpha-D-glucosidic linkages in polysaccharides containing three or more (1-&gt;4)-alpha-linked D-glucose units.. Since only maltooligosaccharides up to a chain length of 6 glucose units are actively transported through the cytoplasmic membrane via the membrane-bound complex of three proteins, MalF, MalG, and MalK, longer maltooligosaccharides must first be degraded by the periplasmic alpha-amylase, the MalS protein. The sequence is that of Periplasmic alpha-amylase (malS) from Escherichia coli (strain K12).